Reading from the N-terminus, the 422-residue chain is 4-hydroxy-3-methylbut-2-en-1-yl diphosphate synthase (flavodoxin) (422 aa).

[4Fe-4S] cluster is bound by residues cysteine 316, cysteine 319, cysteine 362, and glutamate 369.

This sequence belongs to the IspG family. Requires [4Fe-4S] cluster as cofactor.

The catalysed reaction is (2E)-4-hydroxy-3-methylbut-2-enyl diphosphate + oxidized [flavodoxin] + H2O + 2 H(+) = 2-C-methyl-D-erythritol 2,4-cyclic diphosphate + reduced [flavodoxin]. Its pathway is isoprenoid biosynthesis; isopentenyl diphosphate biosynthesis via DXP pathway; isopentenyl diphosphate from 1-deoxy-D-xylulose 5-phosphate: step 5/6. Functionally, converts 2C-methyl-D-erythritol 2,4-cyclodiphosphate (ME-2,4cPP) into 1-hydroxy-2-methyl-2-(E)-butenyl 4-diphosphate. The sequence is that of 4-hydroxy-3-methylbut-2-en-1-yl diphosphate synthase (flavodoxin) from Ehrlichia ruminantium (strain Welgevonden).